We begin with the raw amino-acid sequence, 220 residues long: Deoxyribose-phosphate aldolase (220 aa).

The active-site Proton donor/acceptor is aspartate 89. Lysine 151 acts as the Schiff-base intermediate with acetaldehyde in catalysis. The Proton donor/acceptor role is filled by lysine 180.

It belongs to the DeoC/FbaB aldolase family. DeoC type 1 subfamily.

It is found in the cytoplasm. The enzyme catalyses 2-deoxy-D-ribose 5-phosphate = D-glyceraldehyde 3-phosphate + acetaldehyde. It participates in carbohydrate degradation; 2-deoxy-D-ribose 1-phosphate degradation; D-glyceraldehyde 3-phosphate and acetaldehyde from 2-deoxy-alpha-D-ribose 1-phosphate: step 2/2. Catalyzes a reversible aldol reaction between acetaldehyde and D-glyceraldehyde 3-phosphate to generate 2-deoxy-D-ribose 5-phosphate. This is Deoxyribose-phosphate aldolase from Streptococcus sanguinis (strain SK36).